A 318-amino-acid chain; its full sequence is MTIELSIVIPMYNEEDNLEHLFARLLEVLTPLKITYEIICVNDGSKDKTLKQLIDCYQSNRQIKIVNLSRNFGKEIALSAGIDYAQGNAVIPIDADLQDPPELIHELVDKWREGYDIVYATRRSRQGETWVKQFTAKMFYKVIGRMTEIKIPPNTGDFRLMDRKVVNAIKQLPERTRFMKGLFAWVGYRQTFVLFDREPRFQGQTKWNYWKLWNFALDGIFSFSLLPLKVWTYLGSIISLLSLAYASFLILKTITLGVDVPGYASLMVAILFLGGVQLISLGVIGEYLGRVYEEVKARPLYLVSDLWGLEYLPLEKLN.

Helical transmembrane passes span 230 to 250 (VWTY…SFLI) and 264 to 284 (ASLM…LGVI).

It belongs to the glycosyltransferase 2 family. GtrB subfamily.

It localises to the cell membrane. This is an uncharacterized protein from Synechocystis sp. (strain ATCC 27184 / PCC 6803 / Kazusa).